Consider the following 90-residue polypeptide: Chromosomal protein MC1c (90 aa).

In terms of biological role, protects DNA against thermal denaturation and modulates transcription. This is Chromosomal protein MC1c from Methanothrix soehngenii (Methanosaeta concilii).